The following is a 454-amino-acid chain: Zinc finger CCCH domain-containing protein 66 (454 aa).

Residues 1–23 (MAAGAGAGGGGGEGDSNGGGTSP) are compositionally biased toward gly residues. Residues 1–30 (MAAGAGAGGGGGEGDSNGGGTSPGGVSAAA) form a disordered region. 5 consecutive C3H1-type zinc fingers follow at residues 66-94 (RIGE…HPPN), 111-139 (RVGQ…HPRE), 157-185 (RPNE…HPQP), 318-346 (RPDQ…HPKE), and 364-392 (RPGE…HPMG). The segment at 405 to 454 (DVSSMHYQLSPSPGHPGILLDGGSGRSHRVPQSDSQQIPSGDGNAEREAS) is disordered. The segment covering 434–443 (VPQSDSQQIP) has biased composition (polar residues).

The polypeptide is Zinc finger CCCH domain-containing protein 66 (Oryza sativa subsp. japonica (Rice)).